The chain runs to 297 residues: ClpXP adapter protein SpxH (297 aa).

Belongs to the SpxH family. In terms of assembly, interacts with Spx.

The protein localises to the cytoplasm. In terms of biological role, adapter protein required for efficient degradation of Spx by ClpXP under non-stress conditions. Interaction with Spx stabilizes Spx and exposes the C-terminus of Spx for recognition and proteolysis by ClpXP. The sequence is that of ClpXP adapter protein SpxH from Bacillus cereus (strain ATCC 14579 / DSM 31 / CCUG 7414 / JCM 2152 / NBRC 15305 / NCIMB 9373 / NCTC 2599 / NRRL B-3711).